Reading from the N-terminus, the 701-residue chain is Elongation factor G (701 aa).

Residues 8-291 (SRYRNIGIVA…AVIDFLPAPT (284 aa)) form the tr-type G domain. GTP contacts are provided by residues 17-24 (AHVDAGKT), 89-93 (DTPGH), and 143-146 (NKMD).

It belongs to the TRAFAC class translation factor GTPase superfamily. Classic translation factor GTPase family. EF-G/EF-2 subfamily.

The protein resides in the cytoplasm. Its function is as follows. Catalyzes the GTP-dependent ribosomal translocation step during translation elongation. During this step, the ribosome changes from the pre-translocational (PRE) to the post-translocational (POST) state as the newly formed A-site-bound peptidyl-tRNA and P-site-bound deacylated tRNA move to the P and E sites, respectively. Catalyzes the coordinated movement of the two tRNA molecules, the mRNA and conformational changes in the ribosome. This is Elongation factor G from Pseudomonas fluorescens (strain Pf0-1).